A 189-amino-acid polypeptide reads, in one-letter code: Elongation factor P (189 aa).

K34 carries the post-translational modification N6-(3,6-diaminohexanoyl)-5-hydroxylysine.

Belongs to the elongation factor P family. In terms of processing, may be beta-lysylated on the epsilon-amino group of Lys-34 by the combined action of EpmA and EpmB, and then hydroxylated on the C5 position of the same residue by EpmC (if this protein is present). Lysylation is critical for the stimulatory effect of EF-P on peptide-bond formation. The lysylation moiety may extend toward the peptidyltransferase center and stabilize the terminal 3-CCA end of the tRNA. Hydroxylation of the C5 position on Lys-34 may allow additional potential stabilizing hydrogen-bond interactions with the P-tRNA.

It localises to the cytoplasm. The protein operates within protein biosynthesis; polypeptide chain elongation. In terms of biological role, involved in peptide bond synthesis. Alleviates ribosome stalling that occurs when 3 or more consecutive Pro residues or the sequence PPG is present in a protein, possibly by augmenting the peptidyl transferase activity of the ribosome. Modification of Lys-34 is required for alleviation. The chain is Elongation factor P from Francisella tularensis subsp. novicida (strain U112).